Here is a 556-residue protein sequence, read N- to C-terminus: Solute carrier family 22 member 20 (556 aa).

At 1-15 (MAFTDLLDALGGVGR) the chain is on the cytoplasmic side. Residues 16 to 36 (FQLVYTALLLLPCGLLACHTF) form a helical membrane-spanning segment. Over 37 to 137 (LQNFTAAAPP…LVCEARTLRD (101 aa)) the chain is Extracellular. N-linked (GlcNAc...) asparagine glycans are attached at residues Asn-39, Asn-54, Asn-61, and Asn-96. Residues 138–158 (LAQSIYMSGVLVGAALFGGLA) traverse the membrane as a helical segment. Topologically, residues 159-166 (DRLGRKAP) are cytoplasmic. Residues 167–187 (LVWSYLQLAVSGAATAYVGSF) form a helical membrane-spanning segment. Over 188–194 (SAYCVFR) the chain is Extracellular. Residues 195-215 (FLMGMTFSGIILNSLSLVVEW) form a helical membrane-spanning segment. Over 216–225 (MPTRGRTVAG) the chain is Cytoplasmic. The chain crosses the membrane as a helical span at residues 226–246 (ILLGFSFTLGQLILAGVAYLI). Topologically, residues 247 to 250 (RPWR) are extracellular. The chain crosses the membrane as a helical span at residues 251–271 (WLQFAVSAPFLVFFLYSWWLP). Over 272-339 (ESSRWLLLHG…DLFRTPAIRR (68 aa)) the chain is Cytoplasmic. A helical membrane pass occupies residues 340–360 (VTCCLMGVWFSNSVAYYGLAM). Topologically, residues 361 to 366 (DLQKFG) are extracellular. A helical transmembrane segment spans residues 367–387 (LSIYLVQALFGIIDIPAMLVA). At 388 to 397 (TTTMIYVGRR) the chain is on the cytoplasmic side. A helical membrane pass occupies residues 398-418 (ATVSSFLILAGLMVIANMFMP). The Extracellular segment spans residues 419 to 425 (EDLQTLR). Residues 426–446 (TVQAALGKGCLASSFICVYLF) traverse the membrane as a helical segment. The Cytoplasmic segment spans residues 447–457 (TGELYPTEIRQ). The chain crosses the membrane as a helical span at residues 458 to 478 (MGMGFASVNARLGGLVAPLIT). The Extracellular portion of the chain corresponds to 479–485 (TLGEISP). A helical transmembrane segment spans residues 486–506 (VLPPVSFGATSVLAGMAVACF). The Cytoplasmic portion of the chain corresponds to 507 to 556 (LTETRNVPLVETIAAMERRVKQGRSKRDTEQKSEEISLQQLGASPLKETI). The segment covering 526 to 541 (VKQGRSKRDTEQKSEE) has biased composition (basic and acidic residues). The disordered stretch occupies residues 526–556 (VKQGRSKRDTEQKSEEISLQQLGASPLKETI).

The protein belongs to the major facilitator (TC 2.A.1) superfamily. Organic cation transporter (TC 2.A.1.19) family. Highly expressed in olfactory mucosa. Weakly expressed in testis. Not detected in heart, spleen, lung, kidney or brain.

Its subcellular location is the membrane. Its function is as follows. Organic anion transporter that mediates the uptake of estrone sulfate. Inhibited by probenecid, propionate, 2-methylbutyrate, 3-methylbutyrate, benzoate, heptanoate and 2-ethylhaxanoate. May act as an odorant transporter. The polypeptide is Solute carrier family 22 member 20 (Slc22a20) (Mus musculus (Mouse)).